A 127-amino-acid chain; its full sequence is MSSNYATPLDDEVFPLSFANYQFTEHVSLGEHYSLNTSEDAKYNNLNGPFVVPRDTGKFDLNTSSASDETVFSLDNPQENNYKHQAMNNVQDCRMAVAAKTTQSCDKLTDLYANAAQQNYRLWLSSF.

The protein localises to the vacuole membrane. In terms of biological role, required for viability of cells lacking mtDNA. This is Interacting with cytoskeleton protein 1 (ICY1) from Saccharomyces cerevisiae (strain ATCC 204508 / S288c) (Baker's yeast).